Consider the following 269-residue polypeptide: Elongation factor Ts (269 aa).

Positions 76-79 are involved in Mg(2+) ion dislocation from EF-Tu; the sequence is TDFV.

It belongs to the EF-Ts family.

It localises to the cytoplasm. In terms of biological role, associates with the EF-Tu.GDP complex and induces the exchange of GDP to GTP. It remains bound to the aminoacyl-tRNA.EF-Tu.GTP complex up to the GTP hydrolysis stage on the ribosome. The protein is Elongation factor Ts of Deinococcus geothermalis (strain DSM 11300 / CIP 105573 / AG-3a).